A 217-amino-acid polypeptide reads, in one-letter code: Peptidyl-tRNA hydrolase (217 aa).

Tyr14 is a tRNA binding site. His19 functions as the Proton acceptor in the catalytic mechanism. Residues Tyr64, Asn66, and Asn113 each coordinate tRNA. The segment at 182-217 is disordered; that stretch reads MNRINAPPPKPKREQKRSSDAPDSSSDTNTSNASDG. Positions 202–217 are enriched in low complexity; it reads APDSSSDTNTSNASDG.

The protein belongs to the PTH family. In terms of assembly, monomer.

Its subcellular location is the cytoplasm. It catalyses the reaction an N-acyl-L-alpha-aminoacyl-tRNA + H2O = an N-acyl-L-amino acid + a tRNA + H(+). In terms of biological role, hydrolyzes ribosome-free peptidyl-tRNAs (with 1 or more amino acids incorporated), which drop off the ribosome during protein synthesis, or as a result of ribosome stalling. Its function is as follows. Catalyzes the release of premature peptidyl moieties from peptidyl-tRNA molecules trapped in stalled 50S ribosomal subunits, and thus maintains levels of free tRNAs and 50S ribosomes. This is Peptidyl-tRNA hydrolase from Roseiflexus sp. (strain RS-1).